The primary structure comprises 433 residues: Oxaloacetate decarboxylase beta chain 2 (433 aa).

A run of 9 helical transmembrane segments spans residues 13–35, 42–64, 125–147, 160–182, 214–236, 266–288, 308–327, 339–361, and 413–432; these read LMHLGAGQAIMLLVSLLLLWLAI, LLLLPIGFGGLLSNIPEAGLALT, LFYKVAIGSGVAPLVIFMGVGAM, LLLGAAAQFGIFATVLGALTLNY, LAPELLGAIAVAAYSYMALVPLI, ILFPVVLLMLVALLLPDAAPLLG, TVQNGLINIVTIFLGLSVGA, TLGILLLGVIAFGIGTAAGVLMA, and VAGVIGSAIAAGVMLKYVLA.

Belongs to the GcdB/MmdB/OadB family. In terms of assembly, heterotrimer of an alpha, a beta and a gamma subunit. Na(+) is required as a cofactor.

Its subcellular location is the cell membrane. It catalyses the reaction oxaloacetate + 2 Na(+)(in) + H(+) = pyruvate + 2 Na(+)(out) + CO2. Functionally, catalyzes the decarboxylation of oxaloacetate coupled to Na(+) translocation. This Salmonella typhimurium (strain LT2 / SGSC1412 / ATCC 700720) protein is Oxaloacetate decarboxylase beta chain 2 (oadB2).